Here is an 88-residue protein sequence, read N- to C-terminus: Small ribosomal subunit protein uS15c (88 aa).

This sequence belongs to the universal ribosomal protein uS15 family. In terms of assembly, part of the 30S ribosomal subunit.

It is found in the plastid. It localises to the chloroplast. The polypeptide is Small ribosomal subunit protein uS15c (rps15) (Lepidium virginicum (Virginia pepperweed)).